Consider the following 229-residue polypeptide: Potassium/proton antiporter CemA (229 aa).

4 helical membrane passes run 7–27 (FTPL…SLSF), 114–134 (LICF…LLIL), 154–174 (ILLL…ELMI), and 189–209 (IISG…KYWI).

Belongs to the CemA family.

It is found in the plastid. The protein resides in the chloroplast inner membrane. It carries out the reaction K(+)(in) + H(+)(out) = K(+)(out) + H(+)(in). Contributes to K(+)/H(+) antiport activity by supporting proton efflux to control proton extrusion and homeostasis in chloroplasts in a light-dependent manner to modulate photosynthesis. Prevents excessive induction of non-photochemical quenching (NPQ) under continuous-light conditions. Indirectly promotes efficient inorganic carbon uptake into chloroplasts. This is Potassium/proton antiporter CemA from Gossypium hirsutum (Upland cotton).